We begin with the raw amino-acid sequence, 818 residues long: Dipeptidyl-peptidase 7 (818 aa).

The signal sequence occupies residues 1–22 (MKLKRILLSVALLCGIGTTAMA). Active-site charge relay system residues include His-87, Asp-223, and Ser-645.

This sequence belongs to the peptidase S46 family.

In terms of biological role, catalyzes the removal of dipeptides from the N-terminus of oligopeptides. Most efficiently cleaves the synthetic substrate Met-Leu-methylcoumaryl-7-amide (Met-Leu-MCA), and slowly hydrolyzes Leu-Gln-, Lys-Ala-, Leu-Arg, and Ala-Asn-MCA. Is likely involved in amino acid metabolism and bacterial growth/survival of asaccharolytic P.endodontalis, that utilizes amino acids from extracellular proteinaceous nutrients as energy and carbon sources. The polypeptide is Dipeptidyl-peptidase 7 (Porphyromonas endodontalis (strain ATCC 35406 / DSM 24491 / JCM 8526 / CCUG 16442 / BCRC 14492 / NCTC 13058 / HG 370) (Bacteroides endodontalis)).